The sequence spans 390 residues: Na(+)/H(+) antiporter NhaA 1 (390 aa).

11 helical membrane-spanning segments follow: residues 14 to 34 (SGILIILAMILALILANNGVL), 59 to 79 (TILWVNDGLMAIFFFFIGLEL), 94 to 114 (VALPSIAGIGGVIVPAVIFYV), 125 to 145 (GWAIPTVSDTAFALAVLFLLG), 154 to 174 (LFLLSLAIIDDVAAIIIIAIF), 179 to 199 (LSIISLFISFCAIVILTILNY), 205 to 225 (IYIYLLCGIVLWVSVLMSGIH), 260 to 280 (PIVAFLILPIFAFSNAGVVFS), 295 to 315 (IIFGLFIGKQIGVFSFAFLAI), 328 to 348 (WLHLYGLSILTGVGMSMSLFI), and 362 to 382 (ANKIAILLASTMCAVTGYFVL).

It belongs to the NhaA Na(+)/H(+) (TC 2.A.33) antiporter family.

The protein resides in the cell inner membrane. The enzyme catalyses Na(+)(in) + 2 H(+)(out) = Na(+)(out) + 2 H(+)(in). In terms of biological role, na(+)/H(+) antiporter that extrudes sodium in exchange for external protons. In Campylobacter fetus subsp. fetus (strain 82-40), this protein is Na(+)/H(+) antiporter NhaA 1.